Consider the following 292-residue polypeptide: Shikimate dehydrogenase (NADP(+)) (292 aa).

Shikimate-binding positions include 22–24 (SLS) and Ser-69. Lys-73 (proton acceptor) is an active-site residue. Asn-94 and Asp-111 together coordinate shikimate. NADP(+) is bound by residues 135 to 139 (GVGGA) and Ile-236. Tyr-238 contacts shikimate. Gly-260 serves as a coordination point for NADP(+).

Belongs to the shikimate dehydrogenase family. Homodimer.

The enzyme catalyses shikimate + NADP(+) = 3-dehydroshikimate + NADPH + H(+). It functions in the pathway metabolic intermediate biosynthesis; chorismate biosynthesis; chorismate from D-erythrose 4-phosphate and phosphoenolpyruvate: step 4/7. Involved in the biosynthesis of the chorismate, which leads to the biosynthesis of aromatic amino acids. Catalyzes the reversible NADPH linked reduction of 3-dehydroshikimate (DHSA) to yield shikimate (SA). The sequence is that of Shikimate dehydrogenase (NADP(+)) from Streptococcus pyogenes serotype M3 (strain ATCC BAA-595 / MGAS315).